Consider the following 71-residue polypeptide: Gas vesicle protein A (71 aa).

Positions 12–22 are alpha helix 1; that stretch reads LAEVIDRILDK. The segment at 26–34 is beta-strand 1; sequence VDAWVRVSL. The interval 35 to 37 is beta turn; the sequence is VGI. The tract at residues 38-46 is beta-strand 2; the sequence is ELLAIEARI. Residues 51 to 70 are alpha helix 2; sequence VETYLKYAEAVGLTQSAAVP.

The protein belongs to the gas vesicle GvpA family. The gas vesicle shell is 2 nm thick and consists of a single layer of this protein. It forms helical ribs nearly perpendicular to the long axis of the vesicle.

The protein localises to the gas vesicle shell. In terms of biological role, gas vesicles are hollow, gas filled proteinaceous nanostructures found in some microorganisms. During planktonic growth they allow positioning of the organism at a favorable depth for light or nutrient acquisition. GvpA forms the protein shell. This chain is Gas vesicle protein A, found in Microchaete diplosiphon (Fremyella diplosiphon).